The sequence spans 76 residues: Acyl carrier protein (76 aa).

The Carrier domain maps to 1-76 (MSIEERVKKI…SAIDYVQNNQ (76 aa)). Residue serine 36 is modified to O-(pantetheine 4'-phosphoryl)serine.

It belongs to the acyl carrier protein (ACP) family. Post-translationally, 4'-phosphopantetheine is transferred from CoA to a specific serine of apo-ACP by AcpS. This modification is essential for activity because fatty acids are bound in thioester linkage to the sulfhydryl of the prosthetic group.

The protein localises to the cytoplasm. It functions in the pathway lipid metabolism; fatty acid biosynthesis. Functionally, carrier of the growing fatty acid chain in fatty acid biosynthesis. This Haemophilus influenzae (strain 86-028NP) protein is Acyl carrier protein.